The chain runs to 811 residues: MSKQCLLSCFLFFCFFIPQLSFSCPQDQRQSLLEFKNLLIHNIKDNYTAFEELGTWRPNSDCCKWLRVTCNASSPSKEVIDLNLFLLIPPGLVSSSILRPILRINSLVGLDVSFNNIQGEIPGYAFVNLTSLISLDMCCNRFNGSIPHELFSLTNLQRLDLSRNVIGGTLSGDIKELKNLQELILDENLIGGAIPSEIGSLVELLTLTLRQNMFNSSIPSSVSRLTKLKTIDLQNNFLSSKIPDDIGNLVNLSTLSLSMNKLSGGIPSSIHNLKNLETLQLENNNGLSGEIPAAWLFGLQKLKVLRLEGNNKLQWNNNGYVFPQFKLTHLSLRSCGLEGNIPDWLKNQTALVYLDLSINRLEGRFPKWLADLKIRNITLSDNRLTGSLPPNLFQRPSLYYLVLSRNNFSGQIPDTIGESQVMVLMLSENNFSGSVPKSITKIPFLKLLDLSKNRLSGEFPRFRPESYLEWLDISSNEFSGDVPAYFGGSTSMLLMSQNNFSGEFPQNFRNLSYLIRLDLHDNKISGTVASLISQLSSSVEVLSLRNNSLKGSIPEGISNLTSLKVLDLSENNLDGYLPSSLGNLTCMIKSPEPSAMTIRPYFSSYTDIPNIERLIEIESEDIFSLVVNWKNSKQVLFDRNFYLYTLLDLSKNKLHGEIPTSLGNLKSLKVLNLSNNEFSGLIPQSFGDLEKVESLDLSHNNLTGEIPKTLSKLSELNTLDLRNNKLKGRIPESPQLDRLNNPNIYANNSGICGMQIQVPCFPTQTKQPAEEKEEEDKEEEETIFSWNAAAIGCSCGFLIAVVFMSYNELWK.

A signal peptide spans 1–21 (MSKQCLLSCFLFFCFFIPQLS). Residues 22 to 782 (FSCPQDQRQS…EEEDKEEEET (761 aa)) lie on the Extracellular side of the membrane. N-linked (GlcNAc...) asparagine glycosylation is found at Asn46, Asn71, Asn128, and Asn143. LRR repeat units lie at residues 104–128 (INSL…AFVN), 129–153 (LTSL…LFSL), 155–177 (NLQR…IKEL), 178–201 (KNLQ…IGSL), 203–225 (ELLT…VSRL), 226–249 (TKLK…IGNL), 251–273 (NLST…IHNL), 275–298 (NLET…WLFG), 299–322 (LQKL…GYVF), 324–348 (QFKL…LKNQ), 349–369 (TALV…PKWL), 370–395 (ADLK…LFQR), 397–419 (SLYY…IGES), 421–442 (VMVL…ITKI), 443–466 (PFLK…RPES), 468–488 (LEWL…YFGG), 490–510 (TSML…NFRN), 511–534 (LSYL…LISQ), 536–560 (SSSV…ISNL), 561–583 (TSLK…SLGN), 643–665 (LYTL…LGNL), 666–688 (KSLK…SFGD), 690–713 (EKVE…LSKL), and 714–738 (SELN…QLDR). An N-linked (GlcNAc...) asparagine glycan is attached at Asn215. Asn251 carries an N-linked (GlcNAc...) asparagine glycan. A glycan (N-linked (GlcNAc...) asparagine) is linked at Asn347. 3 N-linked (GlcNAc...) asparagine glycosylation sites follow: Asn376, Asn407, and Asn430. N-linked (GlcNAc...) asparagine glycosylation is found at Asn499 and Asn510. 3 N-linked (GlcNAc...) asparagine glycosylation sites follow: Asn546, Asn559, and Asn583. N-linked (GlcNAc...) asparagine glycans are attached at residues Asn672 and Asn701. An N-linked (GlcNAc...) asparagine glycan is attached at Asn747. The chain crosses the membrane as a helical span at residues 783–803 (IFSWNAAAIGCSCGFLIAVVF). At 804-811 (MSYNELWK) the chain is on the cytoplasmic side.

The protein belongs to the RLP family.

It is found in the cell membrane. The chain is Receptor-like protein 46 from Arabidopsis thaliana (Mouse-ear cress).